The following is a 121-amino-acid chain: MERLKSHRDFVAVLKRRRRVSREDIVVHYLMHDDVVTGDTATVQGRRVGLAVSKAVGNAVTRNAVKRRFRVLARKYESLLPESCDIVLRAKPSAARADFLSLEQQMASCFEAVKRKTASRQ.

Belongs to the RnpA family. In terms of assembly, consists of a catalytic RNA component (M1 or rnpB) and a protein subunit.

It carries out the reaction Endonucleolytic cleavage of RNA, removing 5'-extranucleotides from tRNA precursor.. Its function is as follows. RNaseP catalyzes the removal of the 5'-leader sequence from pre-tRNA to produce the mature 5'-terminus. It can also cleave other RNA substrates such as 4.5S RNA. The protein component plays an auxiliary but essential role in vivo by binding to the 5'-leader sequence and broadening the substrate specificity of the ribozyme. The polypeptide is Ribonuclease P protein component (Bifidobacterium adolescentis (strain ATCC 15703 / DSM 20083 / NCTC 11814 / E194a)).